Reading from the N-terminus, the 807-residue chain is Potassium transporter 9 (807 aa).

The Cytoplasmic segment spans residues 1 to 59; the sequence is MAERVEASSVPEGENTIEEREVGAMWELEQKLDQPMDEEANKLNNMYREKGLSMLMLLR. The chain crosses the membrane as a helical span at residues 60–80; sequence LSFQSLGIVYGDLGTSPLYVF. Topologically, residues 81 to 96 are extracellular; sequence YNTFPDGIDDSEDVIG. Residues 97–117 form a helical membrane-spanning segment; that stretch reads ALSLIIYSLLLIPLIKYVFIV. The Cytoplasmic portion of the chain corresponds to 118-185; it reads CKANDNGQGG…EGKEWRKRAL (68 aa). The chain crosses the membrane as a helical span at residues 186–206; that stretch reads LVVVLLGTCMMIGDGILTPAI. At 207–225 the chain is on the extracellular side; sequence SVLSATGGIKVNNPKMSGD. Residues 226 to 246 form a helical membrane-spanning segment; the sequence is IVVLVAIVILIGLFSMQHYGT. Residues 247 to 248 are Cytoplasmic-facing; that stretch reads DK. The helical transmembrane segment at 249 to 269 threads the bilayer; the sequence is VGWLFAPIVLIWFLFIGATGM. Residues 270 to 299 lie on the Extracellular side of the membrane; sequence YNICKYDTSVLKAFSPTYIYLYFKRRGRDG. Residues 300–320 traverse the membrane as a helical segment; that stretch reads WISLGGILLSITGTEALYADI. At 321–322 the chain is on the cytoplasmic side; it reads AY. Residues 323 to 343 traverse the membrane as a helical segment; that stretch reads FPLLAIQLAFTFFVFPCLLLA. The Extracellular portion of the chain corresponds to 344 to 369; that stretch reads YCGQAAYLVIHKEHYQDAFYASIPDS. Residues 370-390 form a helical membrane-spanning segment; sequence VYWPMFIVATGAAIVGSQATI. Residues 391–417 are Cytoplasmic-facing; it reads SGTYSIVKQAVAHGCFPRVKIVHTSKK. The chain crosses the membrane as a helical span at residues 418 to 438; that stretch reads FLGQIYCPDINWILMLGCIAV. At 439 to 454 the chain is on the extracellular side; sequence TASFKKQSQIGNAYGT. A helical membrane pass occupies residues 455-475; the sequence is AVVLVMLVTTLLMVLIMLLVW. At 476 to 481 the chain is on the cytoplasmic side; that stretch reads HCHWIL. The chain crosses the membrane as a helical span at residues 482-502; that stretch reads VLIFTFLSFFVELSYFSAVIF. The Extracellular segment spans residues 503 to 507; it reads KIDEG. Residues 508 to 528 form a helical membrane-spanning segment; it reads GWVPLIIAAISLLVMSVWHYA. Residues 529–807 are Cytoplasmic-facing; it reads TVKKYEFEMH…LLNVGQVFYV (279 aa).

This sequence belongs to the HAK/KUP transporter (TC 2.A.72.3) family.

It localises to the cell membrane. Functionally, putative potassium transporter. The chain is Potassium transporter 9 (POT9) from Arabidopsis thaliana (Mouse-ear cress).